The chain runs to 329 residues: NADH-quinone oxidoreductase subunit H 2 (329 aa).

The next 8 helical transmembrane spans lie at 12-32 (GAKIALIFFVVLTLAAYLVFA), 78-98 (WLFYLAPAMAAVPAILTFAVI), 120-140 (VGLLFFLALSSIAVYGVALGG), 159-179 (LISYELSMGLSLVPTVMLAGS), 191-211 (GVWFIAYQPVAFLIFLISIAA), 242-262 (LFFVGEYINIIVLGGLATTFF), 270-290 (LLPPFVWFSVKTLAFAFFFIW), and 309-329 (KVLTPLALLNILITGWVLMFV).

This sequence belongs to the complex I subunit 1 family. As to quaternary structure, NDH-1 is composed of 14 different subunits. Subunits NuoA, H, J, K, L, M, N constitute the membrane sector of the complex.

The protein localises to the cell inner membrane. The catalysed reaction is a quinone + NADH + 5 H(+)(in) = a quinol + NAD(+) + 4 H(+)(out). Its function is as follows. NDH-1 shuttles electrons from NADH, via FMN and iron-sulfur (Fe-S) centers, to quinones in the respiratory chain. The immediate electron acceptor for the enzyme in this species is believed to be ubiquinone. Couples the redox reaction to proton translocation (for every two electrons transferred, four hydrogen ions are translocated across the cytoplasmic membrane), and thus conserves the redox energy in a proton gradient. This subunit may bind ubiquinone. In Geobacter sulfurreducens (strain ATCC 51573 / DSM 12127 / PCA), this protein is NADH-quinone oxidoreductase subunit H 2.